We begin with the raw amino-acid sequence, 359 residues long: Fructose-bisphosphate aldolase class 2 (359 aa).

A D-glyceraldehyde 3-phosphate-binding site is contributed by S50. D83 acts as the Proton donor in catalysis. Positions 84, 105, 142, and 198 each coordinate Zn(2+). G199 is a dihydroxyacetone phosphate binding site. A Zn(2+)-binding site is contributed by H232. Dihydroxyacetone phosphate-binding positions include G233–S235 and N275–T278.

It belongs to the class II fructose-bisphosphate aldolase family. Zn(2+) is required as a cofactor.

It catalyses the reaction beta-D-fructose 1,6-bisphosphate = D-glyceraldehyde 3-phosphate + dihydroxyacetone phosphate. It functions in the pathway carbohydrate degradation; glycolysis; D-glyceraldehyde 3-phosphate and glycerone phosphate from D-glucose: step 4/4. Functionally, catalyzes the aldol condensation of dihydroxyacetone phosphate (DHAP or glycerone-phosphate) with glyceraldehyde 3-phosphate (G3P) to form fructose 1,6-bisphosphate (FBP) in gluconeogenesis and the reverse reaction in glycolysis. The protein is Fructose-bisphosphate aldolase class 2 (fbaA) of Synechocystis sp. (strain ATCC 27184 / PCC 6803 / Kazusa).